We begin with the raw amino-acid sequence, 207 residues long: Enolase (207 aa).

Q162 lines the (2R)-2-phosphoglycerate pocket. E204 serves as the catalytic Proton donor.

Belongs to the enolase family.

The protein resides in the cytoplasm. The protein localises to the secreted. It localises to the cell surface. It catalyses the reaction (2R)-2-phosphoglycerate = phosphoenolpyruvate + H2O. Its pathway is carbohydrate degradation; glycolysis; pyruvate from D-glyceraldehyde 3-phosphate: step 4/5. In terms of biological role, catalyzes the reversible conversion of 2-phosphoglycerate (2-PG) into phosphoenolpyruvate (PEP). It is essential for the degradation of carbohydrates via glycolysis. The sequence is that of Enolase from Campylobacter fetus.